Reading from the N-terminus, the 529-residue chain is MFS glucose transporter mfs1 (529 aa).

12 helical membrane-spanning segments follow: residues 7–27 (VYFL…DISS), 52–72 (SITC…SFIA), 86–106 (ILWI…LLVV), 109–129 (VIAG…QAEI), 138–158 (VISL…FIQY), 179–199 (IPWG…FLFP), 272–292 (LQMW…VYIM), 301–321 (LLTA…AIIY), 330–350 (AILI…GLQG), 375–395 (AVGK…ATTI), 415–439 (AVSL…PLLW), and 446–464 (YMIF…FLTA).

The protein belongs to the major facilitator superfamily. Sugar transporter (TC 2.A.1.1) family.

The protein localises to the membrane. In terms of biological role, probable MFS glucose transporter; part of the gene cluster 27 that mediates the biosynthesis of asparasone A, a sclerotium-specific anthraquinone pigment important for sclerotial survival. The polypeptide is MFS glucose transporter mfs1 (Aspergillus flavus (strain ATCC 200026 / FGSC A1120 / IAM 13836 / NRRL 3357 / JCM 12722 / SRRC 167)).